Here is a 656-residue protein sequence, read N- to C-terminus: Choline transporter-like protein 1 (656 aa).

The N-myristoyl glycine moiety is linked to residue glycine 2. Over glycine 2–proline 29 the chain is Cytoplasmic. A helical transmembrane segment spans residues tryptophan 30–alanine 50. Residues threonine 51 to lysine 211 are Extracellular-facing. N-linked (GlcNAc...) asparagine glycans are attached at residues asparagine 134 and asparagine 179. A helical transmembrane segment spans residues glutamate 212–isoleucine 232. Over arginine 233–arginine 237 the chain is Cytoplasmic. The chain crosses the membrane as a helical span at residues valine 238–leucine 258. Residues tryptophan 259–alanine 287 are Extracellular-facing. The chain crosses the membrane as a helical span at residues leucine 288–valine 308. Residues methionine 309–alanine 314 lie on the Cytoplasmic side of the membrane. The chain crosses the membrane as a helical span at residues leucine 315–phenylalanine 335. The Extracellular portion of the chain corresponds to glutamine 336–proline 337. Residues phenylalanine 338–leucine 358 traverse the membrane as a helical segment. The Cytoplasmic segment spans residues glycine 359–proline 379. Residues leucine 380–alanine 400 traverse the membrane as a helical segment. The Extracellular portion of the chain corresponds to cysteine 401–threonine 441. A helical membrane pass occupies residues valine 442 to isoleucine 462. Topologically, residues histidine 463 to aspartate 536 are cytoplasmic. The chain crosses the membrane as a helical span at residues phenylalanine 537–leucine 557. Residues leucine 558–threonine 565 lie on the Extracellular side of the membrane. Residues valine 566–leucine 586 traverse the membrane as a helical segment. At serine 587–alanine 656 the chain is on the cytoplasmic side. The segment at alanine 635–alanine 656 is disordered. Position 651 is a phosphoserine (serine 651).

Belongs to the CTL (choline transporter-like) family. As to expression, expressed in neurons, oligodendrocytes and astrocytes. Also expressed in the mucosal cell layer of the colon. In the developing brain, isoform 1 is expressed in both neurons and oligodendroglial cells, whereas isoform 2 is restricted to oligodendroglial cells.

The protein resides in the cell membrane. It is found in the mitochondrion outer membrane. The enzyme catalyses choline(out) + n H(+)(in) = choline(in) + n H(+)(out). The catalysed reaction is ethanolamine(out) + n H(+)(in) = ethanolamine(in) + n H(+)(out). Its function is as follows. Choline transporter, acts as a choline/H+ antiporter. Also acts as a high-affinity ethanolamine/H+ antiporter, regulating the supply of extracellular ethanolamine (Etn) for the CDP-Etn pathway, redistribute intracellular Etn and balance the CDP-Cho and CDP-Etn arms of the Kennedy pathway. Involved in membrane synthesis and myelin production. The polypeptide is Choline transporter-like protein 1 (Slc44a1) (Rattus norvegicus (Rat)).